Reading from the N-terminus, the 807-residue chain is MVEQLTQHDPRRIGPFEVLGRLGAGGMGLVYLARSASGRRVAIKTVRTELAEDQLFRVRFTREVEAARAVSGFYTAAVVDADPRAAVPWLATAYVPAPSLEEIVNECGPMPTQAVRWLAAGIAQALQSIHGAGLVHRDLKPSNVLVVEDGPRVIDFGIASGVSNTRLTMTNVAVGTPAYMSPEQARDSRSVTGASDIFSLGSTLVFAATGHAPFHGANPVETVFMLVREGPDLEGLPDDLRPLIESCMQMDATHPAAEPRDLQAQLAPHLFASGSDDSGTASAWLPVPATAMIERRRGGRRTARRPPRPRPRRLRAAPQGPGAGHRLAQRGRPAFALPAVLALAAVRRVRTAAGPSAAPDGGPVQLPGAKVPIGPGRRAGEGRGAAAAAPRRRDRLGPAARRSERFLGGHGPHRTVPASTLRPGTPSPAPDRWRPWRFRMSNDVWGTPVVSGDLLYVTSFEVHALDVGNGRRQFKTRDVAWAMAVEGGRIHASDGPSLYALDAASGAEQWRLATDAWVYALKADRGTVLTATRGGGVQGWEASNGEKLWEVTGAQSDFETAEAGPVIHDGTVYLWQDARLRALDARTGLERWSYPIGDAASCGGVPVRVTPATDGYVYVAAGTRVLAVETGSGPVRWHFEAPAVFLSPPAFAPGPAVTGGGVYLADYLGTVYALDATTGKDRWRIATEARSSIEPVLVAVGNVHVGSGSALYTLDAVTDTPKWRFAAGGDVVGAPWWRRPGPLRLGGPRALHPGRGGRPAALKLATGGEITGSPVAQAGVVYACSKDRCVYALDALKGTGTGNRART.

Residues 16–272 (FEVLGRLGAG…QAQLAPHLFA (257 aa)) form the Protein kinase domain. ATP-binding positions include 22–30 (LGAGGMGLV) and Lys-44. Ser-71 carries the phosphoserine; by autocatalysis modification. The Proton acceptor role is filled by Asp-138. Thr-168 bears the Phosphothreonine; by autocatalysis mark. Disordered stretches follow at residues 292-328 (MIER…HRLA) and 353-429 (AGPS…PSPA). Residues 297–315 (RGGRRTARRPPRPRPRRLR) show a composition bias toward basic residues. The segment covering 353 to 363 (AGPSAAPDGGP) has biased composition (low complexity).

Belongs to the protein kinase superfamily. Ser/Thr protein kinase family. In terms of assembly, interacts (via the N-terminal kinase domain) with KbpA; the interaction prevents autophosphorylation of AfsK. Post-translationally, autophosphorylated mainly on threonine residues. Some phosphorylation on serine residues. Autophosphorylation on Thr-168 is the major site enhancing kinase activity towards AfsR, and is regulated though interaction with KbpA.

It carries out the reaction L-seryl-[protein] + ATP = O-phospho-L-seryl-[protein] + ADP + H(+). The catalysed reaction is L-threonyl-[protein] + ATP = O-phospho-L-threonyl-[protein] + ADP + H(+). In terms of biological role, component of the AfsK/AfsR system involved in the response of aerial mycelium formation to glucose. This Streptomyces griseus protein is Serine/threonine-protein kinase AfsK (afsK).